The following is a 116-amino-acid chain: NADPH-dependent 7-cyano-7-deazaguanine reductase (116 aa).

Cys-31 (thioimide intermediate) is an active-site residue. The Proton donor role is filled by Asp-38. Substrate contacts are provided by residues 53–55 and 72–73; these read IEL and YE.

Belongs to the GTP cyclohydrolase I family. QueF type 1 subfamily.

It localises to the cytoplasm. It carries out the reaction 7-aminomethyl-7-carbaguanine + 2 NADP(+) = 7-cyano-7-deazaguanine + 2 NADPH + 3 H(+). Its pathway is tRNA modification; tRNA-queuosine biosynthesis. Its function is as follows. Catalyzes the NADPH-dependent reduction of 7-cyano-7-deazaguanine (preQ0) to 7-aminomethyl-7-deazaguanine (preQ1). The sequence is that of NADPH-dependent 7-cyano-7-deazaguanine reductase from Chlorobium luteolum (strain DSM 273 / BCRC 81028 / 2530) (Pelodictyon luteolum).